The chain runs to 293 residues: Ribosomal protein L11 methyltransferase (293 aa).

Residues Thr145, Gly166, Asp188, and Asn230 each coordinate S-adenosyl-L-methionine.

Belongs to the methyltransferase superfamily. PrmA family.

It localises to the cytoplasm. It catalyses the reaction L-lysyl-[protein] + 3 S-adenosyl-L-methionine = N(6),N(6),N(6)-trimethyl-L-lysyl-[protein] + 3 S-adenosyl-L-homocysteine + 3 H(+). Its function is as follows. Methylates ribosomal protein L11. The protein is Ribosomal protein L11 methyltransferase of Pasteurella multocida (strain Pm70).